Reading from the N-terminus, the 601-residue chain is MSDLSHIRNFAIIAHIDHGKSTLADRLIQTCGGVEARDMKEQLLDSMDLERERGITIKAQTVRLHYTAKSDGRTYQLNLMDTPGHVDFAYEVSRSLAACEGSLLVVDASQGVEAQTLANVYQAIDAGHEIIPVLNKIDLPAAEPERIKQQIEDVIGLDTSDAVGISAKTGLNIDQVLEALVLRLPPPTGDVDAPTQALLVDSWYDSYLGVVILVRVRHGVLRKGMKMLMMATGAVHPIDKVGVFTPKMLETDSLSAGEMGFVMAGIKSVADCQIGDTITDDRAPAAEALPGFKASIPVVWCGLFPVDSSDFEVLRESLAKLRLNDSSFEFQAESSAALGFGFRCGFLGLLHMEIIQERLEREFGLDLITTAPSVVYRMHMTDGTLLELHNPADMPDPVRLDFVEEPWVKATIMVPDEYLGQILALCTERRGIQMDLTYAGSRAMAVYKLPLNEIVFDFYDRLKSISRGYASFDYEVADYAESDLVKVSILVNNEPVDALAFIAHRTQADFRGRQICGRLKDLIPRHLFKVPIQAAIGGRVIARETIAAMRKDVTAKCYGGDITRKKKLLEKQKEGKKKMRQFGKVEIPQSAFINALRMSDD.

The 184-residue stretch at 5–188 (SHIRNFAIIA…ALVLRLPPPT (184 aa)) folds into the tr-type G domain. Residues 17–22 (DHGKST) and 135–138 (NKID) each bind GTP.

The protein belongs to the TRAFAC class translation factor GTPase superfamily. Classic translation factor GTPase family. LepA subfamily.

The protein localises to the cell inner membrane. It catalyses the reaction GTP + H2O = GDP + phosphate + H(+). In terms of biological role, required for accurate and efficient protein synthesis under certain stress conditions. May act as a fidelity factor of the translation reaction, by catalyzing a one-codon backward translocation of tRNAs on improperly translocated ribosomes. Back-translocation proceeds from a post-translocation (POST) complex to a pre-translocation (PRE) complex, thus giving elongation factor G a second chance to translocate the tRNAs correctly. Binds to ribosomes in a GTP-dependent manner. This is Elongation factor 4 from Rhodospirillum rubrum (strain ATCC 11170 / ATH 1.1.1 / DSM 467 / LMG 4362 / NCIMB 8255 / S1).